A 194-amino-acid polypeptide reads, in one-letter code: Mitochondrial import inner membrane translocase subunit Tim22 (194 aa).

Intrachain disulfides connect Cys-69–Cys-141 and Cys-160–Cys-179. The next 3 helical transmembrane spans lie at 74-94 (ALACVGGFVLGGAFGVFTAGI), 123-143 (MSYAKNFAIVGAMFSCTECLI), and 170-190 (AGLKAGAIGCGGFAAFSAAID).

It belongs to the Tim17/Tim22/Tim23 family. In terms of assembly, component of the TIM22 complex, whose core is composed of TIMM22, associated with peripheral protein FXC1/TIMM10B and the 70 kDa heterohexamer. In most cases, the 70 kDa complex is composed of TIMM9 and TIMM10 (TIMM10A or TIMM10B). A small fraction of the 70 kDa complex is composed of TIMM8 (TIMM8A/DDP1 or TIMM8B/DDP2) and TIMM13. The TIM22 complex also contains AGK and TIMM29. Interacts directly with TIMM9, TIMM10A and FXC1/TIMM10B. Interacts (when oxidized) with TIMM29; interaction is direct. In terms of processing, disulfide bonds promote efficient assembly of the TIM22 complex.

The protein resides in the mitochondrion inner membrane. Its function is as follows. Essential core component of the TIM22 complex, a complex that mediates the import and insertion of multi-pass transmembrane proteins into the mitochondrial inner membrane. In the TIM22 complex, it constitutes the voltage-activated and signal-gated channel. Forms a twin-pore translocase that uses the membrane potential as external driving force in 2 voltage-dependent steps. The protein is Mitochondrial import inner membrane translocase subunit Tim22 (TIMM22) of Homo sapiens (Human).